The chain runs to 117 residues: Anti-sigma F factor antagonist (117 aa).

Residues 2–115 form the STAS domain; the sequence is HFQLEMVTRE…QAIDRVRGIV (114 aa). Ser-58 is subject to Phosphoserine.

This sequence belongs to the anti-sigma-factor antagonist family. Phosphorylated by SpoIIAB on a serine residue.

Functionally, in the phosphorylated form it could act as an anti-anti-sigma factor that counteracts SpoIIAB and thus releases sigma f from inhibition. The chain is Anti-sigma F factor antagonist (spoIIAA) from Lysinibacillus sphaericus (Bacillus sphaericus).